A 685-amino-acid chain; its full sequence is Acetate--CoA ligase [ADP-forming] I (685 aa).

An ATP-grasp domain is found at 477–513; it reads LPVLEAYGIEVAPYGIARNVDEARDIAESIGYPVVLK. 503–514 contributes to the ATP binding site; that stretch reads AESIGYPVVLKV.

The protein in the N-terminal section; belongs to the acetate CoA ligase alpha subunit family. It in the C-terminal section; belongs to the acetate CoA ligase beta subunit family. As to quaternary structure, homodimer.

The catalysed reaction is acetate + ATP + CoA = acetyl-CoA + ADP + phosphate. Its activity is regulated as follows. Activity requires divalent metal cations. Catalyzes the reversible formation of acetate and ATP from acetyl-CoA by using ADP and phosphate. Can use other substrates such as propionyl-CoA and butyryl-CoA, but not phenylacetyl-CoA. Seems to be involved primarily in the conversion of acetyl-CoA to acetate. Participates in the degradation of branched-chain amino acids via branched-chain-acyl-CoA esters. The chain is Acetate--CoA ligase [ADP-forming] I from Archaeoglobus fulgidus (strain ATCC 49558 / DSM 4304 / JCM 9628 / NBRC 100126 / VC-16).